We begin with the raw amino-acid sequence, 147 residues long: Ribonuclease 4 (147 aa).

Residues 1 to 28 form the signal peptide; the sequence is MALQRTHSLLLLLLLTLLGLGLVQPSYG. Residue Q29 is modified to Pyrrolidone carboxylic acid. Residues R35, H40, K68, N71, and T72 each contribute to the dUMP site. H40 functions as the Proton acceptor in the catalytic mechanism. Intrachain disulfides connect C53/C109, C67/C120, C85/C135, and C92/C99. H144 (proton donor) is an active-site residue. F145 contacts dUMP.

Belongs to the pancreatic ribonuclease family.

The protein localises to the secreted. Its function is as follows. Cleaves preferentially after uridine bases. Has antimicrobial activity against uropathogenic E.coli (UPEC). Probably contributes to urinary tract sterility. The protein is Ribonuclease 4 (RNASE4) of Pan troglodytes (Chimpanzee).